The chain runs to 550 residues: Chaperonin GroEL (550 aa).

Residues 29-32 (TAGP), Lys50, 86-90 (DGTTT), Gly418, and Asp499 each bind ATP.

This sequence belongs to the chaperonin (HSP60) family. As to quaternary structure, forms a cylinder of 14 subunits composed of two heptameric rings stacked back-to-back. Interacts with the co-chaperonin GroES.

The protein resides in the cytoplasm. It carries out the reaction ATP + H2O + a folded polypeptide = ADP + phosphate + an unfolded polypeptide.. In terms of biological role, together with its co-chaperonin GroES, plays an essential role in assisting protein folding. The GroEL-GroES system forms a nano-cage that allows encapsulation of the non-native substrate proteins and provides a physical environment optimized to promote and accelerate protein folding. The polypeptide is Chaperonin GroEL (Wolbachia sp. subsp. Brugia malayi (strain TRS)).